The chain runs to 376 residues: Succinyl-diaminopimelate desuccinylase (376 aa).

Residue H67 participates in Zn(2+) binding. D69 is a catalytic residue. D100 contacts Zn(2+). The active-site Proton acceptor is the E134. Positions 135, 163, and 349 each coordinate Zn(2+).

The protein belongs to the peptidase M20A family. DapE subfamily. Homodimer. It depends on Zn(2+) as a cofactor. The cofactor is Co(2+).

It carries out the reaction N-succinyl-(2S,6S)-2,6-diaminopimelate + H2O = (2S,6S)-2,6-diaminopimelate + succinate. It functions in the pathway amino-acid biosynthesis; L-lysine biosynthesis via DAP pathway; LL-2,6-diaminopimelate from (S)-tetrahydrodipicolinate (succinylase route): step 3/3. Functionally, catalyzes the hydrolysis of N-succinyl-L,L-diaminopimelic acid (SDAP), forming succinate and LL-2,6-diaminopimelate (DAP), an intermediate involved in the bacterial biosynthesis of lysine and meso-diaminopimelic acid, an essential component of bacterial cell walls. This Shewanella sediminis (strain HAW-EB3) protein is Succinyl-diaminopimelate desuccinylase.